The chain runs to 304 residues: UPF0282 protein TSIB_1029 (304 aa).

The protein belongs to the UPF0282 family.

This Thermococcus sibiricus (strain DSM 12597 / MM 739) protein is UPF0282 protein TSIB_1029.